The following is a 395-amino-acid chain: S-adenosylmethionine synthase (395 aa).

Histidine 16 provides a ligand contact to ATP. Aspartate 18 lines the Mg(2+) pocket. Glutamate 44 provides a ligand contact to K(+). L-methionine-binding residues include glutamate 57 and glutamine 100. Residues 100–110 (QSPDIAQGVDR) are flexible loop. ATP-binding positions include 167-169 (DAK), 233-234 (RF), aspartate 242, 248-249 (RK), alanine 265, and lysine 269. Position 242 (aspartate 242) interacts with L-methionine. L-methionine is bound at residue lysine 273.

The protein belongs to the AdoMet synthase family. Homotetramer; dimer of dimers. The cofactor is Mg(2+). K(+) is required as a cofactor.

The protein resides in the cytoplasm. The catalysed reaction is L-methionine + ATP + H2O = S-adenosyl-L-methionine + phosphate + diphosphate. The protein operates within amino-acid biosynthesis; S-adenosyl-L-methionine biosynthesis; S-adenosyl-L-methionine from L-methionine: step 1/1. Catalyzes the formation of S-adenosylmethionine (AdoMet) from methionine and ATP. The overall synthetic reaction is composed of two sequential steps, AdoMet formation and the subsequent tripolyphosphate hydrolysis which occurs prior to release of AdoMet from the enzyme. This is S-adenosylmethionine synthase from Burkholderia mallei (strain NCTC 10247).